Consider the following 425-residue polypeptide: Serine hydroxymethyltransferase (425 aa).

132-134 contacts (6S)-5,6,7,8-tetrahydrofolate; sequence GHL. N6-(pyridoxal phosphate)lysine is present on K237.

Belongs to the SHMT family. Homodimer. The cofactor is pyridoxal 5'-phosphate.

The protein resides in the cytoplasm. It catalyses the reaction (6R)-5,10-methylene-5,6,7,8-tetrahydrofolate + glycine + H2O = (6S)-5,6,7,8-tetrahydrofolate + L-serine. The protein operates within one-carbon metabolism; tetrahydrofolate interconversion. It functions in the pathway amino-acid biosynthesis; glycine biosynthesis; glycine from L-serine: step 1/1. Catalyzes the reversible interconversion of serine and glycine with tetrahydrofolate (THF) serving as the one-carbon carrier. This reaction serves as the major source of one-carbon groups required for the biosynthesis of purines, thymidylate, methionine, and other important biomolecules. Also exhibits THF-independent aldolase activity toward beta-hydroxyamino acids, producing glycine and aldehydes, via a retro-aldol mechanism. The sequence is that of Serine hydroxymethyltransferase from Wolbachia sp. subsp. Brugia malayi (strain TRS).